We begin with the raw amino-acid sequence, 455 residues long: 1-deoxy-D-xylulose 5-phosphate reductoisomerase (455 aa).

Threonine 30, glycine 31, serine 32, isoleucine 33, glutamine 63, and asparagine 159 together coordinate NADPH. Lysine 160 contacts 1-deoxy-D-xylulose 5-phosphate. NADPH is bound at residue glutamate 161. Mn(2+) is bound at residue aspartate 185. 1-deoxy-D-xylulose 5-phosphate is bound by residues serine 186 and glutamate 187. A Mn(2+)-binding site is contributed by glutamate 187. Positions 205-214 (YATAKQSIQP) are enriched in polar residues. The tract at residues 205–233 (YATAKQSIQPESVRATDPPSSTTDSPAKT) is disordered. 1-deoxy-D-xylulose 5-phosphate contacts are provided by serine 246 and histidine 269. An NADPH-binding site is contributed by glycine 275. 1-deoxy-D-xylulose 5-phosphate contacts are provided by serine 282, asparagine 287, lysine 288, and glutamate 291. Glutamate 291 is a binding site for Mn(2+).

The protein belongs to the DXR family. It depends on Mg(2+) as a cofactor. Mn(2+) serves as cofactor.

The catalysed reaction is 2-C-methyl-D-erythritol 4-phosphate + NADP(+) = 1-deoxy-D-xylulose 5-phosphate + NADPH + H(+). It functions in the pathway isoprenoid biosynthesis; isopentenyl diphosphate biosynthesis via DXP pathway; isopentenyl diphosphate from 1-deoxy-D-xylulose 5-phosphate: step 1/6. Catalyzes the NADPH-dependent rearrangement and reduction of 1-deoxy-D-xylulose-5-phosphate (DXP) to 2-C-methyl-D-erythritol 4-phosphate (MEP). The sequence is that of 1-deoxy-D-xylulose 5-phosphate reductoisomerase from Rhodopirellula baltica (strain DSM 10527 / NCIMB 13988 / SH1).